The primary structure comprises 76 residues: Zinc finger protein 706 (76 aa).

Positions 1–13 (MARGQQKIQSQQK) are enriched in low complexity. 2 disordered regions span residues 1-32 (MARGQQKIQSQQKNAKKQAGQKKKQGHDQKAA) and 53-76 (TFKQHFESKHPKTPLPPELADVQA). The segment covering 14–25 (NAKKQAGQKKKQ) has biased composition (basic residues). The C2H2-type zinc-finger motif lies at 39–62 (YTCTVCRTQMPDPKTFKQHFESKH). The span at 53–62 (TFKQHFESKH) shows a compositional bias: basic and acidic residues.

The protein localises to the cytoplasm. It is found in the nucleus. In terms of biological role, transcription repressor involved in the exit of embryonic stem cells (ESCs) from self-renewal. Acts by repressing expression of KLF4. The chain is Zinc finger protein 706 from Homo sapiens (Human).